The primary structure comprises 145 residues: D-aminoacyl-tRNA deacylase (145 aa).

The short motif at 137–138 (GP) is the Gly-cisPro motif, important for rejection of L-amino acids element.

It belongs to the DTD family. Homodimer.

The protein resides in the cytoplasm. It carries out the reaction glycyl-tRNA(Ala) + H2O = tRNA(Ala) + glycine + H(+). The catalysed reaction is a D-aminoacyl-tRNA + H2O = a tRNA + a D-alpha-amino acid + H(+). Its function is as follows. An aminoacyl-tRNA editing enzyme that deacylates mischarged D-aminoacyl-tRNAs. Also deacylates mischarged glycyl-tRNA(Ala), protecting cells against glycine mischarging by AlaRS. Acts via tRNA-based rather than protein-based catalysis; rejects L-amino acids rather than detecting D-amino acids in the active site. By recycling D-aminoacyl-tRNA to D-amino acids and free tRNA molecules, this enzyme counteracts the toxicity associated with the formation of D-aminoacyl-tRNA entities in vivo and helps enforce protein L-homochirality. The polypeptide is D-aminoacyl-tRNA deacylase (Teredinibacter turnerae (strain ATCC 39867 / T7901)).